The primary structure comprises 301 residues: Rhodopsin (301 aa).

At 1 to 18 (LHMIHLHWYQYPPMNPMM) the chain is on the extracellular side. The helical transmembrane segment at 19 to 43 (YPLLLIFMLFTGILCLAGNFVTIWV) threads the bilayer. Residues 44–55 (FMNTKSLRTPAN) lie on the Cytoplasmic side of the membrane. Residues 56-78 (LLVVNLAMSDFLMMFTMFPPMMV) traverse the membrane as a helical segment. Residues 79–92 (TCYYHTWTLGPTFC) lie on the Extracellular side of the membrane. The cysteines at positions 92 and 169 are disulfide-linked. The chain crosses the membrane as a helical span at residues 93 to 115 (QVYGFLGNLCGCASIWTMVFITF). The short motif at 116 to 118 (DRY) is the 'Ionic lock' involved in activated form stabilization element. Residues 116-134 (DRYNVIVKGVAGEPLSTKK) lie on the Cytoplasmic side of the membrane. A helical transmembrane segment spans residues 135-155 (ASLWILIVWVLSLAWCMAPFF). Residues 156-182 (GWNRYVPEGNLTGCGTDYLSEDILSRS) lie on the Extracellular side of the membrane. An N-linked (GlcNAc...) asparagine glycan is attached at N165. The chain crosses the membrane as a helical span at residues 183 to 204 (YLYIYSTWVYFLPLTITIYCYV). At 205-245 (FIIKAVAAHEKGMRDQAKKMGIKSLRNEEAQKTSAECRLAK) the chain is on the cytoplasmic side. A helical membrane pass occupies residues 246–267 (IAMTTVALWFIAWTPYLLINWV). Over 268 to 278 (GMFARSYLSPV) the chain is Extracellular. A helical membrane pass occupies residues 279–300 (YTIWGYVFAKANAVYNPIVYAI). At K288 the chain carries N6-(retinylidene)lysine.

Belongs to the G-protein coupled receptor 1 family. Opsin subfamily. As to quaternary structure, homodimer. Interacts with GNAQ. Contains one covalently linked retinal chromophore.

It localises to the cell projection. It is found in the rhabdomere membrane. Its function is as follows. Photoreceptor required for image-forming vision at low light intensity. Can use both retinal and 3-dehydroretinal as visual pigment. Light-induced isomerization of 11-cis to all-trans retinal triggers a conformational change that activates signaling via G-proteins. Signaling via GNAQ probably mediates the activation of phospholipase C. This is Rhodopsin (RHO) from Procambarus milleri (Miami cave crayfish).